We begin with the raw amino-acid sequence, 218 residues long: Oocyte-specific homeobox protein 7 (218 aa).

A compositionally biased stretch (polar residues) spans serine 40–serine 72. Residues serine 40–leucine 77 form a disordered region. Positions phenylalanine 94–asparagine 153 form a DNA-binding region, homeobox.

Belongs to the paired homeobox family. Obox subfamily. In terms of tissue distribution, specifically expressed in oocytes and early embryos.

Its subcellular location is the nucleus. Transcription factor required for zygotic genome activation (ZGA), a critical event in early embryonic development during which the developmental control passes from maternally provided mRNAs to the expression of the zygotic genome after fertilization. Together with other Obox family members, required in early two-cell stage embryos to kick-start the major ZGA wave by facilitating RNA Polymerase II 'pre-configuration', during which RNA Polymerase II relocates from the initial one-cell stage binding targets to ZGA gene promoters and distal enhancers. Mechanistically, promotes recruitment of RNA Polymerase II from (CG-rich) non-ZGA genes to (CG-poor) ZGA genes at the two-cell stage. Binds to regulatory DNA sequences containing a 5'-ACNCCTTTAATCCCAG-3' sequence motif. Most maternal and zygotic Obox family proteins can compensate for one another. In Mus musculus (Mouse), this protein is Oocyte-specific homeobox protein 7.